A 110-amino-acid polypeptide reads, in one-letter code: Iron-sulfur cluster assembly protein CyaY (110 aa).

Belongs to the frataxin family.

Its function is as follows. Involved in iron-sulfur (Fe-S) cluster assembly. May act as a regulator of Fe-S biogenesis. In Stutzerimonas stutzeri (strain A1501) (Pseudomonas stutzeri), this protein is Iron-sulfur cluster assembly protein CyaY.